We begin with the raw amino-acid sequence, 132 residues long: Small ribosomal subunit protein uS8 (132 aa).

The protein belongs to the universal ribosomal protein uS8 family. In terms of assembly, part of the 30S ribosomal subunit. Contacts proteins S5 and S12.

In terms of biological role, one of the primary rRNA binding proteins, it binds directly to 16S rRNA central domain where it helps coordinate assembly of the platform of the 30S subunit. The chain is Small ribosomal subunit protein uS8 from Rickettsia bellii (strain OSU 85-389).